Consider the following 34-residue polypeptide: Photosystem II reaction center protein M (34 aa).

Residues 5–25 (ILAFIATALFISIPTAFLLIP) form a helical membrane-spanning segment.

This sequence belongs to the PsbM family. PSII is composed of 1 copy each of membrane proteins PsbA, PsbB, PsbC, PsbD, PsbE, PsbF, PsbH, PsbI, PsbJ, PsbK, PsbL, PsbM, PsbT, PsbX, PsbY, PsbZ, Psb30/Ycf12, at least 3 peripheral proteins of the oxygen-evolving complex and a large number of cofactors. It forms dimeric complexes.

It localises to the plastid. The protein resides in the chloroplast thylakoid membrane. Its function is as follows. One of the components of the core complex of photosystem II (PSII). PSII is a light-driven water:plastoquinone oxidoreductase that uses light energy to abstract electrons from H(2)O, generating O(2) and a proton gradient subsequently used for ATP formation. It consists of a core antenna complex that captures photons, and an electron transfer chain that converts photonic excitation into a charge separation. This subunit is found at the monomer-monomer interface. This is Photosystem II reaction center protein M from Psilotum nudum (Whisk fern).